Here is a 223-residue protein sequence, read N- to C-terminus: Putative 3-methyladenine DNA glycosylase (223 aa).

It belongs to the DNA glycosylase MPG family.

This Rickettsia typhi (strain ATCC VR-144 / Wilmington) protein is Putative 3-methyladenine DNA glycosylase.